Reading from the N-terminus, the 143-residue chain is Small ribosomal subunit protein eS12 (143 aa).

This sequence belongs to the eukaryotic ribosomal protein eS12 family. As to quaternary structure, component of the small ribosomal subunit. Mature ribosomes consist of a small (40S) and a large (60S) subunit. The 40S subunit contains about 32 different proteins and 1 molecule of RNA (18S). The 60S subunit contains 45 different proteins and 3 molecules of RNA (25S, 5.8S and 5S).

It localises to the cytoplasm. Component of the ribosome, a large ribonucleoprotein complex responsible for the synthesis of proteins in the cell. The small ribosomal subunit (SSU) binds messenger RNAs (mRNAs) and translates the encoded message by selecting cognate aminoacyl-transfer RNA (tRNA) molecules. The large subunit (LSU) contains the ribosomal catalytic site termed the peptidyl transferase center (PTC), which catalyzes the formation of peptide bonds, thereby polymerizing the amino acids delivered by tRNAs into a polypeptide chain. The nascent polypeptides leave the ribosome through a tunnel in the LSU and interact with protein factors that function in enzymatic processing, targeting, and the membrane insertion of nascent chains at the exit of the ribosomal tunnel. This Candida albicans (strain SC5314 / ATCC MYA-2876) (Yeast) protein is Small ribosomal subunit protein eS12 (RPS12).